Reading from the N-terminus, the 315-residue chain is Homoserine O-succinyltransferase (315 aa).

Cys142 acts as the Acyl-thioester intermediate in catalysis. Positions 163 and 192 each coordinate substrate. The active-site Proton acceptor is the His235. Glu237 is a catalytic residue. Residue Arg249 coordinates substrate.

Belongs to the MetA family.

The protein localises to the cytoplasm. The catalysed reaction is L-homoserine + succinyl-CoA = O-succinyl-L-homoserine + CoA. It functions in the pathway amino-acid biosynthesis; L-methionine biosynthesis via de novo pathway; O-succinyl-L-homoserine from L-homoserine: step 1/1. Its function is as follows. Transfers a succinyl group from succinyl-CoA to L-homoserine, forming succinyl-L-homoserine. The sequence is that of Homoserine O-succinyltransferase from Shewanella piezotolerans (strain WP3 / JCM 13877).